Here is a 275-residue protein sequence, read N- to C-terminus: Bis(5'-nucleosyl)-tetraphosphatase, symmetrical (275 aa).

This sequence belongs to the Ap4A hydrolase family.

The catalysed reaction is P(1),P(4)-bis(5'-adenosyl) tetraphosphate + H2O = 2 ADP + 2 H(+). Functionally, hydrolyzes diadenosine 5',5'''-P1,P4-tetraphosphate to yield ADP. The sequence is that of Bis(5'-nucleosyl)-tetraphosphatase, symmetrical from Actinobacillus succinogenes (strain ATCC 55618 / DSM 22257 / CCUG 43843 / 130Z).